A 271-amino-acid polypeptide reads, in one-letter code: Putative carboxymethylenebutenolidase (271 aa).

Active-site residues include cysteine 147, aspartate 204, and histidine 236.

Belongs to the dienelactone hydrolase family.

It catalyses the reaction 2-(5-oxo-2,5-dihydrofuran-2-ylidene)acetate + H2O = 4-oxohex-2-enedioate + H(+). The polypeptide is Putative carboxymethylenebutenolidase (ysgA) (Escherichia coli O157:H7).